Consider the following 169-residue polypeptide: Ribosome maturation factor RimM (169 aa).

One can recognise a PRC barrel domain in the interval 97-169 (PGEYYWYQLI…VITVDWDMNF (73 aa)).

It belongs to the RimM family. In terms of assembly, binds ribosomal protein uS19.

It localises to the cytoplasm. An accessory protein needed during the final step in the assembly of 30S ribosomal subunit, possibly for assembly of the head region. Essential for efficient processing of 16S rRNA. May be needed both before and after RbfA during the maturation of 16S rRNA. It has affinity for free ribosomal 30S subunits but not for 70S ribosomes. This is Ribosome maturation factor RimM from Legionella pneumophila subsp. pneumophila (strain Philadelphia 1 / ATCC 33152 / DSM 7513).